A 407-amino-acid chain; its full sequence is Large ribosomal subunit protein uL3-like (407 aa).

Basic residues predominate over residues 1-31 (MSHRKFSAPRHGHLGFLPHKRSHRHRGKVKT). 2 disordered regions span residues 1–35 (MSHRKFSAPRHGHLGFLPHKRSHRHRGKVKTWPRD) and 383–407 (QEKRAFMGPQKKHLEKEKPETSGDL). Basic and acidic residues predominate over residues 394 to 407 (KHLEKEKPETSGDL).

Belongs to the universal ribosomal protein uL3 family. As to quaternary structure, component of the large ribosomal subunit in striated muscle cells.

Functionally, heart- and skeletal muscle-specific component of the ribosome, which regulates muscle function. Component of the large ribosomal subunit in striated muscle cells: replaces the RPL3 paralog in the ribosome in these cells. The ribosome is a large ribonucleoprotein complex responsible for the synthesis of proteins in the cell. Inhibits myotube growth and muscle function. This Bos taurus (Bovine) protein is Large ribosomal subunit protein uL3-like (RPL3L).